Here is a 426-residue protein sequence, read N- to C-terminus: uncharacterized protein (426 aa).

The protein to M.leprae L518_C2_147 and M.tuberculosis Rv1524.

This is an uncharacterized protein from Mycobacterium tuberculosis (strain CDC 1551 / Oshkosh).